The chain runs to 1048 residues: Selenate reductase subunit A (1048 aa).

Residues 1–39 (MENQHQKFISRRNFIKTSALLGGTAFLGTGLPNIKKTYS) constitute a signal peptide (tat-type signal). In terms of domain architecture, 4Fe-4S Mo/W bis-MGD-type spans 56 to 129 (ENILYSACLQ…AGIQHAYDPY (74 aa)). Residues Cys-63, Cys-66, Cys-70, and Cys-115 each contribute to the [4Fe-4S] cluster site. Cys-270 is a Mo-bis(molybdopterin guanine dinucleotide) binding site.

It belongs to the prokaryotic molybdopterin-containing oxidoreductase family. The complex is composed of three subunits: SrdA, SrdB and SrdC. [4Fe-4S] cluster is required as a cofactor. Requires Mo-bis(molybdopterin guanine dinucleotide) as cofactor. Post-translationally, predicted to be exported by the Tat system. The position of the signal peptide cleavage has not been experimentally proven.

It is found in the secreted. The enzyme catalyses selenite + a quinone + H2O = selenate + a quinol. Functionally, component of the respiratory selenate reductase complex, which catalyzes the reduction of selenate to selenite. SrdA is probably the catalytic subunit that reduces selenate. The polypeptide is Selenate reductase subunit A (Mesobacillus selenatarsenatis (strain DSM 18680 / JCM 14380 / FERM P-15431 / SF-1)).